The following is a 206-amino-acid chain: Large ribosomal subunit protein uL4 (206 aa).

Residues 42-93 (KKQQGTHKTKNRSEVSRTGAKMYKQKGTGRARHHSARAPQFRGGGKAHGPVV) are disordered. Positions 64 to 77 (YKQKGTGRARHHSA) are enriched in basic residues.

The protein belongs to the universal ribosomal protein uL4 family. In terms of assembly, part of the 50S ribosomal subunit.

Its function is as follows. One of the primary rRNA binding proteins, this protein initially binds near the 5'-end of the 23S rRNA. It is important during the early stages of 50S assembly. It makes multiple contacts with different domains of the 23S rRNA in the assembled 50S subunit and ribosome. Forms part of the polypeptide exit tunnel. The protein is Large ribosomal subunit protein uL4 of Agrobacterium fabrum (strain C58 / ATCC 33970) (Agrobacterium tumefaciens (strain C58)).